The following is an 82-amino-acid chain: Turripeptide Gsp9.1 (82 aa).

The N-terminal stretch at 1-23 is a signal peptide; sequence MMAKLMITVMMVLLLSLQQGADG. A propeptide spanning residues 24–46 is cleaved from the precursor; it reads RSKRWRKNQMAASSIMRNLITAR. 4-hydroxyproline is present on residues P49 and P50. 3 cysteine pairs are disulfide-bonded: C53/C68, C58/C72, and C64/C79. 4-carboxyglutamate is present on residues E60 and E63.

It belongs to the Pg turripeptide superfamily. As to expression, expressed by the venom duct.

It is found in the secreted. This chain is Turripeptide Gsp9.1, found in Gemmula speciosa (Splendid gem-turris).